Here is a 95-residue protein sequence, read N- to C-terminus: uncharacterized protein (95 aa).

This is an uncharacterized protein from Haemophilus influenzae (strain ATCC 51907 / DSM 11121 / KW20 / Rd).